A 368-amino-acid chain; its full sequence is DNA replication and repair protein RecF (368 aa).

30-37 (GKNGTGKT) contributes to the ATP binding site.

Belongs to the RecF family.

The protein resides in the cytoplasm. In terms of biological role, the RecF protein is involved in DNA metabolism; it is required for DNA replication and normal SOS inducibility. RecF binds preferentially to single-stranded, linear DNA. It also seems to bind ATP. The protein is DNA replication and repair protein RecF of Chloroherpeton thalassium (strain ATCC 35110 / GB-78).